The following is a 216-amino-acid chain: MSSRIGGKSKRSGELLAQKLQSEGISNPAVLKAIAHSPRHIFVPEILAHKAYDNTALPIGQGQTISQPYIVAKMSELLLADGRPQNILEIGTGSGYQTAILAQLTDKVFSVERIKALQWQAKRCLRAMDLHNVAMKHGDGWQGWRSKGPFDAIIVTAAPSSVPPALLDQLADGGRLVIPVGEQTQILKIITREGDVYNEQQVEAVRFVPLVPGDLL.

Serine 66 is a catalytic residue.

Belongs to the methyltransferase superfamily. L-isoaspartyl/D-aspartyl protein methyltransferase family.

Its subcellular location is the cytoplasm. It carries out the reaction [protein]-L-isoaspartate + S-adenosyl-L-methionine = [protein]-L-isoaspartate alpha-methyl ester + S-adenosyl-L-homocysteine. Catalyzes the methyl esterification of L-isoaspartyl residues in peptides and proteins that result from spontaneous decomposition of normal L-aspartyl and L-asparaginyl residues. It plays a role in the repair and/or degradation of damaged proteins. This chain is Protein-L-isoaspartate O-methyltransferase, found in Colwellia psychrerythraea (strain 34H / ATCC BAA-681) (Vibrio psychroerythus).